Consider the following 502-residue polypeptide: MSQTPGGAPMAPEAMGCHSTADMAAAASAAGNGELMERFKADYPVGPHDKPQSMCPAFGSLRTGLRMRRVGTIISGSACCTYGLSFVSHFYGARRSIGYVPFNSESLVTGKLFEDIREAVHEMADPQRYDAIVVTNLCVPTASGVPLRLLPSEINGVRIVGIDVPGFGVPTHAEAKDVLAGAMLKYARSEIEAGPVQAPVSGRSDRPTVALLGEMFPADPVMIGALLAPLGLAAGPVVPCRDWRELYAALDSGVAAAIHPFYTASVREFQAAGRAIVGSAPVGHDGTAAWLAAIGEAYGIAADKVAAAQNAFLPAIRGALAGAPIKGRITLSGYEGSELIVARLLIESGAEVPYVGTAAGRTPWSAADREWLEARGTVVKFRASLEDDLAAMQGFEPDLAVGTTPVVQKAKSLGIPSLYFTNLISARPLMGPAGAGSLAQVINAAIGNRERMSKMKAFFAGVGEGDTAGIWEGAPNLRPDFRAAHQKKLEKAARAAKSEEMI.

3 consecutive transmembrane segments (helical) span residues 70–87 (VGTI…LSFV), 131–147 (AIVV…GVPL), and 221–238 (VMIG…GPVV).

The protein belongs to the BchN/ChlN family. Chlorophyllide reductase is composed of three subunits; BchX, BchY and BchZ. Forms a heterodimer of one BchY and one BchZ subunit.

The protein localises to the cell membrane. The catalysed reaction is 3-deacetyl-3-vinylbacteriochlorophyllide a + 2 oxidized [2Fe-2S]-[ferredoxin] + ADP + phosphate = chlorophyllide a + 2 reduced [2Fe-2S]-[ferredoxin] + ATP + H2O + H(+). The enzyme catalyses bacteriochlorophyllide a + 2 oxidized [2Fe-2S]-[ferredoxin] + ADP + phosphate = 3-acetyl-3-devinylchlorophyllide a + 2 reduced [2Fe-2S]-[ferredoxin] + ATP + H2O + H(+). It catalyses the reaction 3-deacetyl-3-(1-hydroxyethyl)bacteriochlorophyllide a + 2 oxidized [2Fe-2S]-[ferredoxin] + ADP + phosphate = 3-devinyl-3-(1-hydroxyethyl)chlorophyllide a + 2 reduced [2Fe-2S]-[ferredoxin] + ATP + H2O + H(+). It functions in the pathway porphyrin-containing compound metabolism; bacteriochlorophyll biosynthesis (light-independent). Functionally, converts chlorophylls (Chl) into bacteriochlorophylls (BChl) by reducing ring B of the tetrapyrrole. In Cereibacter sphaeroides (strain ATCC 17023 / DSM 158 / JCM 6121 / CCUG 31486 / LMG 2827 / NBRC 12203 / NCIMB 8253 / ATH 2.4.1.) (Rhodobacter sphaeroides), this protein is Chlorophyllide reductase 52.5 kDa chain (bchY).